Here is a 274-residue protein sequence, read N- to C-terminus: NAD-dependent protein deacetylase (274 aa).

In terms of domain architecture, Deacetylase sirtuin-type spans 1 to 274; that stretch reads MDSRMSDLQA…CDEVLAEVVP (274 aa). Residues 26–46 and 104–107 each bind NAD(+); these read GAGCSTASGIPDYRDGQGQWK and QNVD. Residue His122 is the Proton acceptor of the active site. Positions 130, 133, 181, and 184 each coordinate Zn(2+). Residues 221–223, 247–249, and Cys265 contribute to the NAD(+) site; these read GSS and NLG.

The protein belongs to the sirtuin family. Class II subfamily. The cofactor is Zn(2+).

It is found in the cytoplasm. It carries out the reaction N(6)-acetyl-L-lysyl-[protein] + NAD(+) + H2O = 2''-O-acetyl-ADP-D-ribose + nicotinamide + L-lysyl-[protein]. Functionally, NAD-dependent protein deacetylase which modulates the activities of several enzymes which are inactive in their acetylated form. In Bordetella pertussis (strain Tohama I / ATCC BAA-589 / NCTC 13251), this protein is NAD-dependent protein deacetylase.